The sequence spans 245 residues: 1-(5-phosphoribosyl)-5-[(5-phosphoribosylamino)methylideneamino] imidazole-4-carboxamide isomerase (245 aa).

Asp7 acts as the Proton acceptor in catalysis. Asp129 (proton donor) is an active-site residue.

The protein belongs to the HisA/HisF family.

It is found in the cytoplasm. It carries out the reaction 1-(5-phospho-beta-D-ribosyl)-5-[(5-phospho-beta-D-ribosylamino)methylideneamino]imidazole-4-carboxamide = 5-[(5-phospho-1-deoxy-D-ribulos-1-ylimino)methylamino]-1-(5-phospho-beta-D-ribosyl)imidazole-4-carboxamide. It functions in the pathway amino-acid biosynthesis; L-histidine biosynthesis; L-histidine from 5-phospho-alpha-D-ribose 1-diphosphate: step 4/9. The protein is 1-(5-phosphoribosyl)-5-[(5-phosphoribosylamino)methylideneamino] imidazole-4-carboxamide isomerase of Pectobacterium carotovorum subsp. carotovorum (strain PC1).